A 460-amino-acid chain; its full sequence is Flavin-containing monooxygenase FMO GS-OX-like 9 (460 aa).

Residue 20 to 25 (GAGPAG) coordinates FAD. 222 to 227 (GNSMSG) is a binding site for NADP(+).

Belongs to the FMO family. FAD is required as a cofactor.

Its function is as follows. Catalyzes the conversion of methylthioalkyl glucosinolates of any chain length into methylsulfinylalkyl glucosinolates. This chain is Flavin-containing monooxygenase FMO GS-OX-like 9, found in Arabidopsis thaliana (Mouse-ear cress).